A 175-amino-acid chain; its full sequence is MSSSPAARRELSYSWGYLFFDEPPLSVEKAWRLVQSSRFGKTLILVGDVVSKSFRERGLGDFFIVDGHTRRNLKVEDLPGKAEAFTCKNRPGEISRECYELLRNLLTSAIGRGKKIVVYVEGEEDLLSLVALLYCPLNDSWVIYGNFRGYLEVIPCTSFFRSVAENLLVKHFEKD.

Positions 48, 49, 50, 66, and 124 each coordinate GTP.

This sequence belongs to the GTP-dependent DPCK family.

The catalysed reaction is 3'-dephospho-CoA + GTP = GDP + CoA + H(+). It functions in the pathway cofactor biosynthesis; coenzyme A biosynthesis. Its function is as follows. Catalyzes the GTP-dependent phosphorylation of the 3'-hydroxyl group of dephosphocoenzyme A to form coenzyme A (CoA). This chain is GTP-dependent dephospho-CoA kinase, found in Thermofilum pendens (strain DSM 2475 / Hrk 5).